Here is a 910-residue protein sequence, read N- to C-terminus: DNA mismatch repair protein MutS (910 aa).

The segment covering Met1–Gly15 has biased composition (polar residues). Positions Met1 to Val94 are disordered. The segment covering Asp44–Arg54 has biased composition (low complexity). Gly726–Ser733 is an ATP binding site.

The protein belongs to the DNA mismatch repair MutS family.

Functionally, this protein is involved in the repair of mismatches in DNA. It is possible that it carries out the mismatch recognition step. This protein has a weak ATPase activity. The polypeptide is DNA mismatch repair protein MutS (Synechococcus sp. (strain WH7803)).